Consider the following 212-residue polypeptide: 3-demethoxyubiquinol 3-hydroxylase (212 aa).

Glu-61, Glu-91, His-94, Glu-143, Glu-175, and His-178 together coordinate Fe cation.

The protein belongs to the COQ7 family. It depends on Fe cation as a cofactor.

It localises to the cell membrane. It carries out the reaction a 5-methoxy-2-methyl-3-(all-trans-polyprenyl)benzene-1,4-diol + AH2 + O2 = a 3-demethylubiquinol + A + H2O. It participates in cofactor biosynthesis; ubiquinone biosynthesis. Its function is as follows. Catalyzes the hydroxylation of 2-nonaprenyl-3-methyl-6-methoxy-1,4-benzoquinol during ubiquinone biosynthesis. This Methylibium petroleiphilum (strain ATCC BAA-1232 / LMG 22953 / PM1) protein is 3-demethoxyubiquinol 3-hydroxylase.